Consider the following 508-residue polypeptide: Photosystem II CP47 reaction center protein (508 aa).

Helical transmembrane passes span 21 to 36, 101 to 115, 140 to 156, 203 to 218, 237 to 252, and 457 to 472; these read SVHI…WAGS, IVFS…IWHW, GIHL…FGAF, IAAG…FHLS, VLSS…AFVV, and SFAL…HGSR.

Belongs to the PsbB/PsbC family. PsbB subfamily. As to quaternary structure, PSII is composed of 1 copy each of membrane proteins PsbA, PsbB, PsbC, PsbD, PsbE, PsbF, PsbH, PsbI, PsbJ, PsbK, PsbL, PsbM, PsbT, PsbX, PsbY, PsbZ, Psb30/Ycf12, at least 3 peripheral proteins of the oxygen-evolving complex and a large number of cofactors. It forms dimeric complexes. It depends on Binds multiple chlorophylls. PSII binds additional chlorophylls, carotenoids and specific lipids. as a cofactor.

The protein localises to the plastid. It localises to the chloroplast thylakoid membrane. Its function is as follows. One of the components of the core complex of photosystem II (PSII). It binds chlorophyll and helps catalyze the primary light-induced photochemical processes of PSII. PSII is a light-driven water:plastoquinone oxidoreductase, using light energy to abstract electrons from H(2)O, generating O(2) and a proton gradient subsequently used for ATP formation. This Helianthus annuus (Common sunflower) protein is Photosystem II CP47 reaction center protein.